A 380-amino-acid chain; its full sequence is Succinyl-diaminopimelate desuccinylase (380 aa).

His69 lines the Zn(2+) pocket. The active site involves Asp71. Residue Asp102 participates in Zn(2+) binding. Glu135 serves as the catalytic Proton acceptor. Positions 136, 164, and 353 each coordinate Zn(2+).

This sequence belongs to the peptidase M20A family. DapE subfamily. As to quaternary structure, homodimer. The cofactor is Zn(2+). Co(2+) serves as cofactor.

It carries out the reaction N-succinyl-(2S,6S)-2,6-diaminopimelate + H2O = (2S,6S)-2,6-diaminopimelate + succinate. It participates in amino-acid biosynthesis; L-lysine biosynthesis via DAP pathway; LL-2,6-diaminopimelate from (S)-tetrahydrodipicolinate (succinylase route): step 3/3. Its function is as follows. Catalyzes the hydrolysis of N-succinyl-L,L-diaminopimelic acid (SDAP), forming succinate and LL-2,6-diaminopimelate (DAP), an intermediate involved in the bacterial biosynthesis of lysine and meso-diaminopimelic acid, an essential component of bacterial cell walls. The chain is Succinyl-diaminopimelate desuccinylase from Cereibacter sphaeroides (strain ATCC 17025 / ATH 2.4.3) (Rhodobacter sphaeroides).